Here is a 155-residue protein sequence, read N- to C-terminus: Ribosomal RNA large subunit methyltransferase H (155 aa).

Residues L72, G104, and 123 to 128 (LAKITL) each bind S-adenosyl-L-methionine.

The protein belongs to the RNA methyltransferase RlmH family. As to quaternary structure, homodimer.

The protein resides in the cytoplasm. The enzyme catalyses pseudouridine(1915) in 23S rRNA + S-adenosyl-L-methionine = N(3)-methylpseudouridine(1915) in 23S rRNA + S-adenosyl-L-homocysteine + H(+). Specifically methylates the pseudouridine at position 1915 (m3Psi1915) in 23S rRNA. The sequence is that of Ribosomal RNA large subunit methyltransferase H from Mycoplasma capricolum subsp. capricolum (strain California kid / ATCC 27343 / NCTC 10154).